Consider the following 232-residue polypeptide: Vesicle transport through interaction with t-SNAREs homolog 1B (232 aa).

A2 is subject to N-acetylalanine. Interaction with CLINT1 regions lie at residues 2–23 and 69–73; these read AASA…GLLE and APLTF. Topologically, residues 2–208 are cytoplasmic; that stretch reads AASAASSEHF…SRKVITNKLL (207 aa). Residues 36–98 are a coiled coil; that stretch reads AGTEEKKKLV…AKLHREVRST (63 aa). At R107 the chain carries Omega-N-methylarginine. S138 carries the phosphoserine modification. Residues 160–201 are a coiled coil; it reads GTEIIEELGEQRDQLERTKSRLVNTNENLSKSRKILRSMSRK. Residues 209–229 traverse the membrane as a helical; Anchor for type IV membrane protein segment; it reads LSVIILLELAILVGLVYYKFF. Over 230–232 the chain is Vesicular; it reads RHH.

It belongs to the VTI1 family. As to quaternary structure, forms a SNARE complex with STX7, STX8 and VAMP8 which functions in the homotypic fusion of late endosomes. Component of the SNARE complex composed of STX7, STX8, VAMP7 and VIT1B that is required for heterotypic fusion of late endosomes with lysosomes. May interact with STX17. Interacts with CLINT1. As to expression, broadly expressed.

It localises to the early endosome membrane. Its subcellular location is the late endosome membrane. The protein localises to the lysosome membrane. It is found in the cytoplasmic granule. The protein resides in the recycling endosome membrane. Its function is as follows. V-SNARE that mediates vesicle transport pathways through interactions with t-SNAREs on the target membrane. These interactions are proposed to mediate aspects of the specificity of vesicle trafficking and to promote fusion of the lipid bilayers. The polypeptide is Vesicle transport through interaction with t-SNAREs homolog 1B (Vti1b) (Mus musculus (Mouse)).